Here is a 259-residue protein sequence, read N- to C-terminus: Putative protein-disulfide oxidoreductase RBE_1288 (259 aa).

The signal sequence occupies residues 1 to 20 (MRNSFITLIFLLLLSGCSEE). The disordered stretch occupies residues 25–54 (VEQESSESITPAQASTSDENNNQTTETTTP). The span at 33–42 (ITPAQASTSD) shows a compositional bias: polar residues. Positions 43–54 (ENNNQTTETTTP) are enriched in low complexity. The Thioredoxin domain occupies 47 to 251 (QTTETTTPAV…ISAAIDKAIE (205 aa)). A disulfide bridge links Cys-104 with Cys-107.

The protein belongs to the thioredoxin family. DsbA subfamily.

It is found in the periplasm. Functionally, may be required for disulfide bond formation in some proteins. This chain is Putative protein-disulfide oxidoreductase RBE_1288, found in Rickettsia bellii (strain RML369-C).